We begin with the raw amino-acid sequence, 432 residues long: MAGLGLGSAVPVWLAEDDLGCIICQGLLDWPATLPCGHSFCRHCLEALWGARDARRWACPTCRQGAAQQPHLRKNTLLQDLADKYRRAAREIQAGSDPAHCPCPGSSSLSSAAARPRRRPELQRVAVEKSITEVAQELTELVEHLVDIVRSLQNQRPLSESGPDNELSILGKAFSSGVDLSMASPKLVTSDTAAGKIRDILHDLEEIQEKLQESVTWKEAPEAQMQGELLEAPSSSSCPLPDQSHPALRRASRFAQWAIHPTFNLKSLSCSLEVSKDSRTVTVSHRPQPYRWSCERFSTSQVLCSQALSSGKHYWEVDTRNCSHWAVGVASWEMSRDQVLGRTMDSCCVEWKGTSQLSAWHMVKETVLGSDRPGVVGIWLNLEEGKLAFYSVDNQEKLLYECTISASSPLYPAFWLYGLHPGNYLIIKQVKV.

Residues 21–63 form an RING-type zinc finger; that stretch reads CIICQGLLDWPATLPCGHSFCRHCLEALWGARDARRWACPTCR. A disordered region spans residues 95–121; sequence GSDPAHCPCPGSSSLSSAAARPRRRPE. A compositionally biased stretch (low complexity) spans 102–114; the sequence is PCPGSSSLSSAAA. Coiled coils occupy residues 121 to 156 and 191 to 216; these read ELQRVAVEKSITEVAQELTELVEHLVDIVRSLQNQR and DTAAGKIRDILHDLEEIQEKLQESVT. In terms of domain architecture, B30.2/SPRY spans 241-432; the sequence is PDQSHPALRR…NYLIIKQVKV (192 aa).

As to quaternary structure, homodimer. Interacts (homodimer) with RIGI (double-stranded RNA-bound oligomeric form); involved in both RIGI ubiquitination, oligomerization into filaments associated with viral RNAs and the bridging of these filaments. Interacts with UBE2D3 and UBE2N; E2 ubiquitin ligases involved in RNF135-mediated ubiquitination of RIGI and activation of the RIG-I signaling pathway. Interacts with PCBP2. Post-translationally, (Microbial infection) Cleaved and inactivated by hepatitis C virus NS3/NS4A. Expressed in skeletal muscle, spleen, kidney, placenta, prostate, stomach, thyroid and tongue. Also weakly expressed in heart, thymus, liver and lung.

It localises to the cytoplasm. The protein resides in the stress granule. The enzyme catalyses S-ubiquitinyl-[E2 ubiquitin-conjugating enzyme]-L-cysteine + [acceptor protein]-L-lysine = [E2 ubiquitin-conjugating enzyme]-L-cysteine + N(6)-ubiquitinyl-[acceptor protein]-L-lysine.. The protein operates within protein modification; protein ubiquitination. In terms of biological role, E2-dependent E3 ubiquitin-protein ligase that functions as a RIGI coreceptor in the sensing of viral RNAs in cell cytoplasm and the activation of the antiviral innate immune response. Together with the UBE2D3, UBE2N and UB2V1 E2 ligases, catalyzes the 'Lys-63'-linked polyubiquitination of RIGI oligomerized on viral RNAs, an essential step in the activation of the RIG-I signaling pathway. Through a ubiquitin-independent parallel mechanism, which consists in bridging RIGI filaments forming on longer viral RNAs, further activates the RIG-I signaling pathway. This second mechanism that synergizes with the ubiquitin-dependent one would thereby allow an RNA length-dependent regulation of the RIG-I signaling pathway. Associated with the E2 ligase UBE2N, also constitutively synthesizes unanchored 'Lys-63'-linked polyubiquitin chains that may also activate the RIG-I signaling pathway. The polypeptide is E3 ubiquitin-protein ligase RNF135 (Homo sapiens (Human)).